The primary structure comprises 460 residues: Signal recognition particle 54 kDa protein (460 aa).

GTP contacts are provided by residues 104-111 (GLQGSGKT), 184-188 (DTAGR), and 242-245 (TKLD).

The protein belongs to the GTP-binding SRP family. SRP54 subfamily. As to quaternary structure, part of the signal recognition particle protein translocation system, which is composed of SRP and FtsY. Archaeal SRP consists of a 7S RNA molecule of 300 nucleotides and two protein subunits: SRP54 and SRP19.

It is found in the cytoplasm. The catalysed reaction is GTP + H2O = GDP + phosphate + H(+). In terms of biological role, involved in targeting and insertion of nascent membrane proteins into the cytoplasmic membrane. Binds to the hydrophobic signal sequence of the ribosome-nascent chain (RNC) as it emerges from the ribosomes. The SRP-RNC complex is then targeted to the cytoplasmic membrane where it interacts with the SRP receptor FtsY. In Halobacterium salinarum (strain ATCC 29341 / DSM 671 / R1), this protein is Signal recognition particle 54 kDa protein.